The sequence spans 403 residues: S-adenosylmethionine synthase (403 aa).

His-15 contacts ATP. Asp-17 lines the Mg(2+) pocket. Residue Glu-43 participates in K(+) binding. Glu-56 and Gln-99 together coordinate L-methionine. Residues 99 to 109 form a flexible loop region; that stretch reads QSPDINQGVDR. Residues 166 to 168, 232 to 233, Asp-241, 247 to 248, Ala-264, and Lys-268 each bind ATP; these read DAK, KF, and RK. Asp-241 provides a ligand contact to L-methionine. Lys-272 serves as a coordination point for L-methionine.

It belongs to the AdoMet synthase family. In terms of assembly, homotetramer; dimer of dimers. Mg(2+) is required as a cofactor. K(+) serves as cofactor.

The protein resides in the cytoplasm. It carries out the reaction L-methionine + ATP + H2O = S-adenosyl-L-methionine + phosphate + diphosphate. The protein operates within amino-acid biosynthesis; S-adenosyl-L-methionine biosynthesis; S-adenosyl-L-methionine from L-methionine: step 1/1. In terms of biological role, catalyzes the formation of S-adenosylmethionine (AdoMet) from methionine and ATP. The overall synthetic reaction is composed of two sequential steps, AdoMet formation and the subsequent tripolyphosphate hydrolysis which occurs prior to release of AdoMet from the enzyme. The chain is S-adenosylmethionine synthase from Xanthomonas campestris pv. campestris (strain ATCC 33913 / DSM 3586 / NCPPB 528 / LMG 568 / P 25).